Reading from the N-terminus, the 229-residue chain is Triosephosphate isomerase (229 aa).

6-8 (NLK) serves as a coordination point for substrate. H85 functions as the Electrophile in the catalytic mechanism. The Proton acceptor role is filled by E152. Substrate contacts are provided by G158 and S188.

It belongs to the triosephosphate isomerase family. In terms of assembly, homodimer.

Its subcellular location is the cytoplasm. The enzyme catalyses D-glyceraldehyde 3-phosphate = dihydroxyacetone phosphate. It functions in the pathway carbohydrate biosynthesis; gluconeogenesis. It participates in carbohydrate degradation; glycolysis; D-glyceraldehyde 3-phosphate from glycerone phosphate: step 1/1. Its function is as follows. Involved in the gluconeogenesis. Catalyzes stereospecifically the conversion of dihydroxyacetone phosphate (DHAP) to D-glyceraldehyde-3-phosphate (G3P). The polypeptide is Triosephosphate isomerase (Campylobacter curvus (strain 525.92)).